The following is an 84-amino-acid chain: Sec-independent protein translocase protein TatA (84 aa).

Residues 1–21 (MGGISIWQLLIIAVIVILLFG) traverse the membrane as a helical segment. Residues 40-84 (KKAMSDEDKPADKKDADFEPKNIEQQKTEASAETTAETKKDKEQA) are disordered. Composition is skewed to basic and acidic residues over residues 42–66 (AMSD…EQQK) and 75–84 (AETKKDKEQA).

This sequence belongs to the TatA/E family. As to quaternary structure, the Tat system comprises two distinct complexes: a TatABC complex, containing multiple copies of TatA, TatB and TatC subunits, and a separate TatA complex, containing only TatA subunits. Substrates initially bind to the TatABC complex, which probably triggers association of the separate TatA complex to form the active translocon.

The protein localises to the cell inner membrane. Functionally, part of the twin-arginine translocation (Tat) system that transports large folded proteins containing a characteristic twin-arginine motif in their signal peptide across membranes. TatA could form the protein-conducting channel of the Tat system. This chain is Sec-independent protein translocase protein TatA, found in Vibrio atlanticus (strain LGP32) (Vibrio splendidus (strain Mel32)).